The sequence spans 141 residues: Putative nickel-responsive regulator (141 aa).

4 residues coordinate Ni(2+): H80, H91, H93, and C99.

Belongs to the transcriptional regulatory CopG/NikR family. The cofactor is Ni(2+).

Functionally, transcriptional regulator. This is Putative nickel-responsive regulator from Methanococcus vannielii (strain ATCC 35089 / DSM 1224 / JCM 13029 / OCM 148 / SB).